The primary structure comprises 428 residues: MRVVILGSGVVGVASAYYLARAGHEVTVIDREAGPALETSFANAGQISPGYAAPWAAPGVPLKAVKWMFEKHAPLAIRLDGTRFQLQWMYQMLRNCTAERYAVNKGRMVRLAEYSRDCLQALRADTGIQYEGRTGGTLQLFRTQQQLDGAAKDIAVLQEANVPFELLSPAELKKAEPALAAVSHKLTGGLRLPGDETGDCQLFTTRLAALAESLGVKFRYNTPIDALAIAGGKIAGVQCGSETVRADAYVVALGSYSTSFISNLMKVPVYPLKGYSITAPIVNEAAAPVSTVLDETYKIAITRFDQRIRVGGMAEIVGFDKKLRAARRETLEMCVNDLFPGGGDTSKATFWTGLRPMTPDGTPIVGRTPVSNLFLNTGHGTLGWTMSCGSGQLLADLISGKMPAIQADDLSVHRYLKDVPGQTRPAYA.

3–17 (VVILGSGVVGVASAY) serves as a coordination point for FAD.

It belongs to the DadA oxidoreductase family. Requires FAD as cofactor.

It catalyses the reaction a D-alpha-amino acid + A + H2O = a 2-oxocarboxylate + AH2 + NH4(+). It functions in the pathway amino-acid degradation; D-alanine degradation; NH(3) and pyruvate from D-alanine: step 1/1. In terms of biological role, oxidative deamination of D-amino acids. In Burkholderia cenocepacia (strain ATCC BAA-245 / DSM 16553 / LMG 16656 / NCTC 13227 / J2315 / CF5610) (Burkholderia cepacia (strain J2315)), this protein is D-amino acid dehydrogenase.